Here is a 324-residue protein sequence, read N- to C-terminus: Adenosine kinase (324 aa).

Residues serine 8, aspartate 12, serine 36, glycine 48, asparagine 52, phenylalanine 102, phenylalanine 116, and 172-173 contribute to the substrate site; that span reads QQ. ATP contacts are provided by residues asparagine 195, 223 to 228, and glycine 256; that span reads TLGPKG. Aspartate 257 is a substrate binding site. The Proton acceptor role is filled by aspartate 257.

Belongs to the carbohydrate kinase PfkB family. In terms of assembly, homodimer. The cofactor is Mg(2+).

The enzyme catalyses adenosine + ATP = AMP + ADP + H(+). It catalyses the reaction adenosine + GTP = GDP + AMP + H(+). The catalysed reaction is dGTP + adenosine = dGDP + AMP + H(+). It functions in the pathway purine metabolism; AMP biosynthesis via salvage pathway; AMP from adenosine: step 1/1. Catalyzes the phosphorylation of adenosine to adenosine monophosphate (AMP). Prefers dGTP and GTP to ATP as phosphate donors in vitro. This chain is Adenosine kinase (adoK), found in Mycobacterium bovis (strain ATCC BAA-935 / AF2122/97).